Here is a 353-residue protein sequence, read N- to C-terminus: Immune-associated nucleotide-binding protein 8 (353 aa).

Over residues 1–10 (MANDQKNSES) the composition is skewed to polar residues. The tract at residues 1–43 (MANDQKNSESFPAKEDHKKDDAAAPAEVDHKDEFSASQPHPVE) is disordered. The segment covering 12 to 34 (PAKEDHKKDDAAAPAEVDHKDEF) has biased composition (basic and acidic residues). Positions 40-248 (HPVENIVLVG…YTDEMYHMIK (209 aa)) constitute an AIG1-type G domain. The tract at residues 49–56 (GRTGNGKS) is G1. GTP contacts are provided by residues 49 to 57 (GRTGNGKSA) and serine 70. The segment at 76–80 (GVTME) is G2. Residues 98–101 (DTPG) are G3. The segment at 168–171 (TGGD) is G4. The tract at residues 207 to 209 (DNK) is G5. GTP is bound at residue asparagine 208. A coiled-coil region spans residues 244 to 291 (YHMIKEENERHKKEQEELESKGHSEEQLAALMKELQIMNERNLKAMAE).

This sequence belongs to the TRAFAC class TrmE-Era-EngA-EngB-Septin-like GTPase superfamily. AIG1/Toc34/Toc159-like paraseptin GTPase family. IAN subfamily. As to expression, mainly expressed in leaves.

This is Immune-associated nucleotide-binding protein 8 from Arabidopsis thaliana (Mouse-ear cress).